We begin with the raw amino-acid sequence, 246 residues long: Pyridoxine 5'-phosphate synthase (246 aa).

Asparagine 12 serves as a coordination point for 3-amino-2-oxopropyl phosphate. Position 14–15 (14–15 (DH)) interacts with 1-deoxy-D-xylulose 5-phosphate. Arginine 23 is a binding site for 3-amino-2-oxopropyl phosphate. Histidine 48 serves as the catalytic Proton acceptor. Arginine 50 and histidine 55 together coordinate 1-deoxy-D-xylulose 5-phosphate. Glutamate 75 functions as the Proton acceptor in the catalytic mechanism. 1-deoxy-D-xylulose 5-phosphate is bound at residue threonine 105. The active-site Proton donor is the histidine 196. 3-amino-2-oxopropyl phosphate contacts are provided by residues glycine 197 and 218 to 219 (GH).

Belongs to the PNP synthase family. As to quaternary structure, homooctamer; tetramer of dimers.

The protein resides in the cytoplasm. It carries out the reaction 3-amino-2-oxopropyl phosphate + 1-deoxy-D-xylulose 5-phosphate = pyridoxine 5'-phosphate + phosphate + 2 H2O + H(+). It functions in the pathway cofactor biosynthesis; pyridoxine 5'-phosphate biosynthesis; pyridoxine 5'-phosphate from D-erythrose 4-phosphate: step 5/5. Functionally, catalyzes the complicated ring closure reaction between the two acyclic compounds 1-deoxy-D-xylulose-5-phosphate (DXP) and 3-amino-2-oxopropyl phosphate (1-amino-acetone-3-phosphate or AAP) to form pyridoxine 5'-phosphate (PNP) and inorganic phosphate. The protein is Pyridoxine 5'-phosphate synthase of Thiobacillus denitrificans (strain ATCC 25259 / T1).